Here is a 667-residue protein sequence, read N- to C-terminus: Beta-galactosidase LacZ (667 aa).

Arg-109 contacts substrate. Residue Cys-113 coordinates Zn(2+). Residue Asn-147 coordinates substrate. Glu-148 serves as the catalytic Proton donor. Positions 153, 155, and 158 each coordinate Zn(2+). Glu-307 acts as the Nucleophile in catalysis. Substrate contacts are provided by residues Trp-315 and 355–358 (EKFH).

This sequence belongs to the glycosyl hydrolase 42 family.

The catalysed reaction is Hydrolysis of terminal non-reducing beta-D-galactose residues in beta-D-galactosides.. Catalyzes the hydrolysis of lactose to its constituent monosaccharides glucose and galactose. The protein is Beta-galactosidase LacZ of Lactobacillus acidophilus (strain ATCC 700396 / NCK56 / N2 / NCFM).